We begin with the raw amino-acid sequence, 651 residues long: Probable potassium transport system protein Kup (651 aa).

Transmembrane regions (helical) follow at residues 41-61, 82-102, 130-150, 163-183, 194-214, 235-255, 276-296, 309-329, 366-386, 395-415, 426-446, and 450-470; these read LVLGALGVVYGDIGTSPIYAF, VVSLIFWALTLVVTVKYVLFV, LILGVGICGAALFFGDAVITP, IVAPNLTPFVVPATVVILVTL, VAIVFGPIMALWFVALGASGL, FLTVSPAVAFVTVGAVFLAMT, WLWIVFPCLLLNYFGQAAFIL, MIPSFALWPMVLLATAATVIA, IYIPRVNLLLGLAVVILVLGF, AYGIAVTGNMLVTTVLLYIVM, ALPIILGFLVIDMLFFSANII, and EGGWASIGIATVLVLIMWTWV.

It belongs to the HAK/KUP transporter (TC 2.A.72) family.

Its subcellular location is the cell inner membrane. It catalyses the reaction K(+)(in) + H(+)(in) = K(+)(out) + H(+)(out). Transport of potassium into the cell. Likely operates as a K(+):H(+) symporter. The polypeptide is Probable potassium transport system protein Kup (Brucella suis (strain ATCC 23445 / NCTC 10510)).